A 364-amino-acid polypeptide reads, in one-letter code: Uroporphyrinogen decarboxylase (364 aa).

Substrate contacts are provided by residues 28–32 (RQAGR), aspartate 78, tyrosine 160, threonine 215, and histidine 333.

Belongs to the uroporphyrinogen decarboxylase family. In terms of assembly, homodimer.

It is found in the cytoplasm. It catalyses the reaction uroporphyrinogen III + 4 H(+) = coproporphyrinogen III + 4 CO2. It functions in the pathway porphyrin-containing compound metabolism; protoporphyrin-IX biosynthesis; coproporphyrinogen-III from 5-aminolevulinate: step 4/4. In terms of biological role, catalyzes the decarboxylation of four acetate groups of uroporphyrinogen-III to yield coproporphyrinogen-III. The chain is Uroporphyrinogen decarboxylase from Burkholderia pseudomallei (strain 668).